The primary structure comprises 313 residues: Porphobilinogen deaminase (313 aa).

An S-(dipyrrolylmethanemethyl)cysteine modification is found at Cys-242.

It belongs to the HMBS family. In terms of assembly, monomer. Dipyrromethane is required as a cofactor.

The enzyme catalyses 4 porphobilinogen + H2O = hydroxymethylbilane + 4 NH4(+). It functions in the pathway porphyrin-containing compound metabolism; protoporphyrin-IX biosynthesis; coproporphyrinogen-III from 5-aminolevulinate: step 2/4. In terms of biological role, tetrapolymerization of the monopyrrole PBG into the hydroxymethylbilane pre-uroporphyrinogen in several discrete steps. The chain is Porphobilinogen deaminase from Pseudomonas putida (strain ATCC 700007 / DSM 6899 / JCM 31910 / BCRC 17059 / LMG 24140 / F1).